The following is a 146-amino-acid chain: Anti-sigma F factor (146 aa).

The protein belongs to the anti-sigma-factor family.

It catalyses the reaction L-seryl-[protein] + ATP = O-phospho-L-seryl-[protein] + ADP + H(+). It carries out the reaction L-threonyl-[protein] + ATP = O-phospho-L-threonyl-[protein] + ADP + H(+). In terms of biological role, binds to sigma F and blocks its ability to form an RNA polymerase holoenzyme (E-sigma F). Phosphorylates SpoIIAA on a serine residue. This phosphorylation may enable SpoIIAA to act as an anti-anti-sigma factor that counteracts SpoIIAB and thus releases sigma F from inhibition. This Bacillus cereus (strain G9842) protein is Anti-sigma F factor.